We begin with the raw amino-acid sequence, 1072 residues long: MSESNAHFSFPKEEEKVLSLWDEIDAFHTSLELTKDKPEFSFFDGPPFATGTPHYGHILASTIKDIVPRYATMTGHHVERRFGWDTHGVPIEHIIDKKLGITGKDDVFKYGLENYNNECRSIVMTYASDWRKTIGRLGRWIDFDNDYKTMYPSFMESTWWAFKQLHEKGQVYRGFKVMPYSTGLTTPLSNFEAQQNYKDVNDPAVTIGFNVIGQEKTQLVAWTTTPWTLPSNLSLCVNADFEYVKIYDETRDRYFILLESLIKTLYKKPKNEKYKIVEKIKGSDLVGLKYEPLFPYFAEQFHETAFRVISDDYVTSDSGTGIVHNAPAFGEEDNAACLKNGVISEDSVLPNAIDDLGRFTKDVPDFEGVYVKDADKLIIKYLTNTGNLLLASQIRHSYPFCWRSDTPLLYRSVPAWFVRVKNIVPQMLDSVMKSHWVPNTIKEKRFANWIANARDWNVSRNRYWGTPIPLWVSDDFEEVVCVGSIKELEELTGVRNITDLHRDVIDKLTIPSKQGKGDLKRIEEVFDCWFESGSMPYASQHYPFENTEKFDERVPANFISEGLDQTRGWFYTLAVLGTHLFGSVPYKNVIVSGIVLAADGRKMSKSLKNYPDPSIVLNKYGADALRLYLINSPVLKAESLKFKEEGVKEVVSKVLLPWWNSFKFLDGQIALLKKMSNIDFQYDDSVKSDNVMDRWILASMQSLVQFIHEEMGQYKLYTVVPKLLNFIDELTNWYIRFNRRRLKGENGVEDCLKALNSLFDALFTFVRAMAPFTPFLSESIYLRLKEYIPEAVLAKYGKDGRSVHFLSYPVVKKEYFDEAIETAVSRMQSVIDLGRNIREKKTISLKTPLKTLVILHSDESYLKDVEALKNYIIEELNVRDVVITSDEAKYGVEYKAVADWPVLGKKLKKDAKKVKDALPSVTSEQVREYLESGKLEVAGIELVKGDLNAIRGLPESAVQAGQETRTDQDVLIIMDTNIYSELKSEGLARELVNRIQKLRKKCGLEATDDVLVEYELVKDTIDFEAIVKEHFDMLSKTCRSDIAKYDGSKTDPIGDEEQSINDTIFKLKVFKL.

Positions 47–57 match the 'HIGH' region motif; the sequence is PFATGTPHYGH. A Glycyl lysine isopeptide (Lys-Gly) (interchain with G-Cter in ubiquitin) cross-link involves residue Lys-486. Residues 602-606 carry the 'KMSKS' region motif; the sequence is KMSKS. Lys-605 is a binding site for ATP. Residues Ser-829 and Ser-1059 each carry the phosphoserine modification.

The protein belongs to the class-I aminoacyl-tRNA synthetase family.

The protein localises to the cytoplasm. It carries out the reaction tRNA(Ile) + L-isoleucine + ATP = L-isoleucyl-tRNA(Ile) + AMP + diphosphate. This is Isoleucine--tRNA ligase, cytoplasmic (ILS1) from Saccharomyces cerevisiae (strain ATCC 204508 / S288c) (Baker's yeast).